We begin with the raw amino-acid sequence, 314 residues long: MIKVVFMGTPDFSVPVLRRLIEDGYDVVGVVTQPDRPVGRKKVMTPTPVKVEAEKHGIPVLQPLKIREQDEYEKVLALEPDLIVTAAFGQIIPKEILEAPKYGCINVHASLLPELRGGAPIHYAIMQGKEKTGITIMYMVEKLDAGDILTQVEVEIEERETTGSLFDKLSEAGAHLLSKTVPLLVQGKLEPIKQDEEKVTFAYNIKREQEKINWAKTGEEVYNHIRGLNPWPVAYTTLAGQVVKVWWGEKVPTANDAQPGTIVEIQEDGFIVVTGNETGIKITELQPAGKKRMSSSQFLRGAKLEIGMKLGEDA.

110–113 (SLLP) is a (6S)-5,6,7,8-tetrahydrofolate binding site.

This sequence belongs to the Fmt family.

The catalysed reaction is L-methionyl-tRNA(fMet) + (6R)-10-formyltetrahydrofolate = N-formyl-L-methionyl-tRNA(fMet) + (6S)-5,6,7,8-tetrahydrofolate + H(+). Functionally, attaches a formyl group to the free amino group of methionyl-tRNA(fMet). The formyl group appears to play a dual role in the initiator identity of N-formylmethionyl-tRNA by promoting its recognition by IF2 and preventing the misappropriation of this tRNA by the elongation apparatus. This chain is Methionyl-tRNA formyltransferase, found in Bacillus cytotoxicus (strain DSM 22905 / CIP 110041 / 391-98 / NVH 391-98).